Here is a 204-residue protein sequence, read N- to C-terminus: MEAPAELLAALPALATALALLLAWLLVRRGAAASPEPARAPPEPAPPAEATGAPAPSRPCAPEPAASPAGPEEPGEPAGLGELGEPAGPGEPEGPGDPAAAPAEAEEQAVEARQEEEQDLDGEKGPSSEGPEEEDGEGFSFKYSPGKLRGNQYKKMMTKEELEEEQRVQKEQLAAIFKLMKDNKETFGEMSDGDVQEQLRLYDM.

Residues 7 to 27 (LLAALPALATALALLLAWLLV) traverse the membrane as a helical segment. A disordered region spans residues 32–148 (AASPEPARAP…FSFKYSPGKL (117 aa)). Residues 38–47 (ARAPPEPAPP) are compositionally biased toward pro residues. Positions 63 to 103 (EPAASPAGPEEPGEPAGLGELGEPAGPGEPEGPGDPAAAPA) are enriched in low complexity. The segment covering 110–126 (VEARQEEEQDLDGEKGP) has biased composition (basic and acidic residues). Ser191 is modified (phosphoserine).

The protein localises to the membrane. The sequence is that of Matrix-remodeling-associated protein 7 (MXRA7) from Homo sapiens (Human).